The sequence spans 124 residues: UPF0337 protein blr1496 (124 aa).

The protein belongs to the UPF0337 (CsbD) family.

The chain is UPF0337 protein blr1496 from Bradyrhizobium diazoefficiens (strain JCM 10833 / BCRC 13528 / IAM 13628 / NBRC 14792 / USDA 110).